Consider the following 216-residue polypeptide: Uracil phosphoribosyltransferase (216 aa).

Residues Arg-81, Arg-106, and 135–143 contribute to the 5-phospho-alpha-D-ribose 1-diphosphate site; that span reads DPMLATGSS. Residues Ile-200 and 205-207 each bind uracil; that span reads GDA. Residue Asp-206 participates in 5-phospho-alpha-D-ribose 1-diphosphate binding.

Belongs to the UPRTase family. It depends on Mg(2+) as a cofactor.

The enzyme catalyses UMP + diphosphate = 5-phospho-alpha-D-ribose 1-diphosphate + uracil. It participates in pyrimidine metabolism; UMP biosynthesis via salvage pathway; UMP from uracil: step 1/1. With respect to regulation, allosterically activated by GTP. Catalyzes the conversion of uracil and 5-phospho-alpha-D-ribose 1-diphosphate (PRPP) to UMP and diphosphate. This chain is Uracil phosphoribosyltransferase (upp), found in Porphyromonas gingivalis (strain ATCC 33277 / DSM 20709 / CIP 103683 / JCM 12257 / NCTC 11834 / 2561).